Reading from the N-terminus, the 151-residue chain is Allatostatin-A (151 aa).

The signal sequence occupies residues 1-21; that stretch reads MNSLHAHLLLLAVCCVGYIAS. Residues 22-54 constitute a propeptide that is removed on maturation; that stretch reads SPVIGQDQRSGDSDADVLLAADEMADNGGDNID. Leucine 64, leucine 88, and leucine 99 each carry leucine amide. Positions 103 to 135 are excised as a propeptide; it reads SDYDYDQDNEIDYRVPPANYLAAERAVRPGRQN. Positions 131 to 151 are disordered; sequence PGRQNKRTTRPQPFNFGLGRR. Leucine 148 bears the Leucine amide mark.

The protein belongs to the allatostatin family.

Its subcellular location is the secreted. In terms of biological role, may act as a neurotransmitter or neuromodulator. In Drosophila melanogaster (Fruit fly), this protein is Allatostatin-A (AstA).